Consider the following 261-residue polypeptide: Cytochrome c oxidase subunit 3 (261 aa).

Over 1 to 15 (MTHQTHAYHMVNPSP) the chain is Mitochondrial matrix. The helical transmembrane segment at 16–34 (WPLTGALSALLMTSGLTMW) threads the bilayer. At 35 to 40 (FHYNST) the chain is on the mitochondrial intermembrane side. Residues 41 to 66 (ILLMLGLTTNMLTMYQWWRDIIREST) form a helical membrane-spanning segment. Topologically, residues 67-72 (FQGHHT) are mitochondrial matrix. A helical membrane pass occupies residues 73–105 (PTVQKGLRYGMILFIISEVLFFTGFFWAFYHSS). Over 106–128 (LAPTPELGGCWPPTGIHPLNPLE) the chain is Mitochondrial intermembrane. A helical membrane pass occupies residues 129–152 (VPLLNTSVLLASGVSITWAHHSLM). Residues 153 to 155 (EGD) lie on the Mitochondrial matrix side of the membrane. Residues 156–183 (RNHMLQALFITIALGIYFTLLQASEYYE) traverse the membrane as a helical segment. At 184–190 (APFTISD) the chain is on the mitochondrial intermembrane side. A helical transmembrane segment spans residues 191-223 (GVYGSTFFVATGFHGLHVIIGSTFLIVCFFRQL). At 224 to 232 (KFHFTSSHH) the chain is on the mitochondrial matrix side. The chain crosses the membrane as a helical span at residues 233-256 (FGFEAAAWYWHFVDVVWLFLYVSI). The Mitochondrial intermembrane segment spans residues 257–261 (YWWGS).

The protein belongs to the cytochrome c oxidase subunit 3 family. As to quaternary structure, component of the cytochrome c oxidase (complex IV, CIV), a multisubunit enzyme composed of 14 subunits. The complex is composed of a catalytic core of 3 subunits MT-CO1, MT-CO2 and MT-CO3, encoded in the mitochondrial DNA, and 11 supernumerary subunits COX4I, COX5A, COX5B, COX6A, COX6B, COX6C, COX7A, COX7B, COX7C, COX8 and NDUFA4, which are encoded in the nuclear genome. The complex exists as a monomer or a dimer and forms supercomplexes (SCs) in the inner mitochondrial membrane with NADH-ubiquinone oxidoreductase (complex I, CI) and ubiquinol-cytochrome c oxidoreductase (cytochrome b-c1 complex, complex III, CIII), resulting in different assemblies (supercomplex SCI(1)III(2)IV(1) and megacomplex MCI(2)III(2)IV(2)).

It is found in the mitochondrion inner membrane. It catalyses the reaction 4 Fe(II)-[cytochrome c] + O2 + 8 H(+)(in) = 4 Fe(III)-[cytochrome c] + 2 H2O + 4 H(+)(out). Functionally, component of the cytochrome c oxidase, the last enzyme in the mitochondrial electron transport chain which drives oxidative phosphorylation. The respiratory chain contains 3 multisubunit complexes succinate dehydrogenase (complex II, CII), ubiquinol-cytochrome c oxidoreductase (cytochrome b-c1 complex, complex III, CIII) and cytochrome c oxidase (complex IV, CIV), that cooperate to transfer electrons derived from NADH and succinate to molecular oxygen, creating an electrochemical gradient over the inner membrane that drives transmembrane transport and the ATP synthase. Cytochrome c oxidase is the component of the respiratory chain that catalyzes the reduction of oxygen to water. Electrons originating from reduced cytochrome c in the intermembrane space (IMS) are transferred via the dinuclear copper A center (CU(A)) of subunit 2 and heme A of subunit 1 to the active site in subunit 1, a binuclear center (BNC) formed by heme A3 and copper B (CU(B)). The BNC reduces molecular oxygen to 2 water molecules using 4 electrons from cytochrome c in the IMS and 4 protons from the mitochondrial matrix. The chain is Cytochrome c oxidase subunit 3 (MT-CO3) from Tragelaphus imberbis (Lesser kudu).